Consider the following 368-residue polypeptide: Proline-rich protein 5-like (368 aa).

Serine 28 carries the phosphoserine modification. Residues 312–368 (LGEESGGEDKCLLLQPSFPPPHRQCSSEPNITDGPDEPEQGATGSQEDSELNCASLS) form a disordered region. A compositionally biased stretch (polar residues) spans 353-368 (ATGSQEDSELNCASLS).

The protein belongs to the PROTOR family. As to quaternary structure, interacts with the mammalian target of rapamycin complex 2 (mTORC2) which contains MTOR, MLST8, PRR5, RICTOR, MAPKAP1 and DEPTOR. Interacts with RFFL. Interacts (via C-terminus) with ZFP36 (via C-terminus); this interaction may accelerate ZFP36-mediated mRNA decay during stress. Interacts with RICTOR. Post-translationally, ubiquitinated. Ubiquitination by RFFL promotes proteasomal degradation of PRR5L thereby modifying the substrate-specific activity of the mTORC2 complex. Ubiquitination by RFFL is stimulated by LPA/lysophosphatidic acid.

Its function is as follows. Associates with the mTORC2 complex that regulates cellular processes including survival and organization of the cytoskeleton. Regulates the activity of the mTORC2 complex in a substrate-specific manner preventing for instance the specific phosphorylation of PKCs and thereby controlling cell migration. Plays a role in the stimulation of ZFP36-mediated mRNA decay of several ZFP36-associated mRNAs, such as TNF-alpha and GM-CSF, in response to stress. Required for ZFP36 localization to cytoplasmic stress granule (SG) and P-body (PB) in response to stress. The polypeptide is Proline-rich protein 5-like (PRR5L) (Bos taurus (Bovine)).